Reading from the N-terminus, the 473-residue chain is tRNA modification GTPase MnmE (473 aa).

(6S)-5-formyl-5,6,7,8-tetrahydrofolate-binding residues include Arg-30, Glu-95, and Arg-134. Residues 230 to 394 enclose the TrmE-type G domain; that stretch reads GVSTVIAGRP…LKLLMASMVE (165 aa). Residues 240-245, 259-265, and 284-287 contribute to the GTP site; these read NAGKST, SHMPGTT, and DTAG. 2 residues coordinate Mg(2+): Ser-244 and Thr-265. Lys-473 contributes to the (6S)-5-formyl-5,6,7,8-tetrahydrofolate binding site.

Belongs to the TRAFAC class TrmE-Era-EngA-EngB-Septin-like GTPase superfamily. TrmE GTPase family. In terms of assembly, homodimer. Heterotetramer of two MnmE and two MnmG subunits. K(+) is required as a cofactor.

The protein resides in the cytoplasm. Its function is as follows. Exhibits a very high intrinsic GTPase hydrolysis rate. Involved in the addition of a carboxymethylaminomethyl (cmnm) group at the wobble position (U34) of certain tRNAs, forming tRNA-cmnm(5)s(2)U34. The polypeptide is tRNA modification GTPase MnmE (Chlorobium luteolum (strain DSM 273 / BCRC 81028 / 2530) (Pelodictyon luteolum)).